A 294-amino-acid chain; its full sequence is Kynurenine formamidase (294 aa).

Residues Met-1–Arg-14 show a composition bias toward basic and acidic residues. A disordered region spans residues Met-1–Gln-20. An HGGXW motif is present at residues His-84–Trp-88. Catalysis depends on Ser-153, which acts as the Nucleophile. Active-site residues include Asp-236 and His-269.

Belongs to the kynurenine formamidase family. In terms of assembly, homodimer.

It localises to the cytoplasm. Its subcellular location is the cytosol. It is found in the nucleus. The catalysed reaction is N-formyl-L-kynurenine + H2O = L-kynurenine + formate + H(+). It participates in amino-acid degradation; L-tryptophan degradation via kynurenine pathway; L-kynurenine from L-tryptophan: step 2/2. Functionally, catalyzes the hydrolysis of N-formyl-L-kynurenine to L-kynurenine, the second step in the kynurenine pathway of tryptophan degradation. Kynurenine may be further oxidized to nicotinic acid, NAD(H) and NADP(H). Required for elimination of toxic metabolites. The polypeptide is Kynurenine formamidase (afmid) (Salmo salar (Atlantic salmon)).